Reading from the N-terminus, the 73-residue chain is Large ribosomal subunit protein bL31 (73 aa).

Residues Cys16, Cys18, Cys37, and Cys40 each coordinate Zn(2+).

The protein belongs to the bacterial ribosomal protein bL31 family. Type A subfamily. In terms of assembly, part of the 50S ribosomal subunit. It depends on Zn(2+) as a cofactor.

Binds the 23S rRNA. This is Large ribosomal subunit protein bL31 from Hamiltonella defensa subsp. Acyrthosiphon pisum (strain 5AT).